The sequence spans 258 residues: tRNA pseudouridine synthase A (258 aa).

Asp52 acts as the Nucleophile in catalysis. A substrate-binding site is contributed by Tyr111.

Belongs to the tRNA pseudouridine synthase TruA family. Homodimer.

It catalyses the reaction uridine(38/39/40) in tRNA = pseudouridine(38/39/40) in tRNA. Its function is as follows. Formation of pseudouridine at positions 38, 39 and 40 in the anticodon stem and loop of transfer RNAs. The polypeptide is tRNA pseudouridine synthase A (Azorhizobium caulinodans (strain ATCC 43989 / DSM 5975 / JCM 20966 / LMG 6465 / NBRC 14845 / NCIMB 13405 / ORS 571)).